The primary structure comprises 456 residues: Anthocyanidin 3-O-galactosyltransferase F3GT1 (456 aa).

An anthocyanidin is bound by residues Ser20, His22, and Gln83. His22 (proton acceptor) is an active-site residue. Catalysis depends on Asp118, which acts as the Charge relay. Position 150 (His150) interacts with an anthocyanidin. Residues Ser281, Trp333, Ala334, His351, Asn355, Ser356, and Glu359 each coordinate UDP. Gly374 is an an anthocyanidin binding site.

This sequence belongs to the UDP-glycosyltransferase family. As to expression, expressed at low levels in stems and leaves. Expressed in ovaries.

It catalyses the reaction cyanidin + UDP-alpha-D-galactose = cyanidin 3-O-beta-D-galactoside + UDP + H(+). The protein operates within pigment biosynthesis; anthocyanin biosynthesis. Functionally, involved in anthocyanin biosynthesis by catalyzing the galactosylation of cyanidin. Required for the accumulation of anthocyanin in red-fleshed kiwifruit varieties. Seems to be the key enzyme regulating the accumulation of anthocyanin in red-fleshed kiwi fruits. This is Anthocyanidin 3-O-galactosyltransferase F3GT1 from Actinidia chinensis var. chinensis (Chinese soft-hair kiwi).